Here is a 420-residue protein sequence, read N- to C-terminus: Probable glycosyltransferase YdaM (420 aa).

The next 4 helical transmembrane spans lie at 4 to 24 (TLFF…MFLM), 299 to 319 (IIFD…GVIM), 332 to 352 (LHLS…FLFM), and 371 to 391 (FFIV…LVIY).

This sequence belongs to the glycosyltransferase 2 family.

The protein localises to the cell membrane. The sequence is that of Probable glycosyltransferase YdaM (ydaM) from Bacillus subtilis (strain 168).